The sequence spans 460 residues: GTPase Der (460 aa).

2 consecutive EngA-type G domains span residues Phe3 to Thr167 and Ile189 to Asn364. GTP is bound by residues Gly9–Ser16, Asp56–Leu60, Asn119–Glu122, Gly195–Ser202, Asp242–Leu246, and Asn307–Asp310. Positions Arg365–Ala449 constitute a KH-like domain.

It belongs to the TRAFAC class TrmE-Era-EngA-EngB-Septin-like GTPase superfamily. EngA (Der) GTPase family. In terms of assembly, associates with the 50S ribosomal subunit.

In terms of biological role, GTPase that plays an essential role in the late steps of ribosome biogenesis. This is GTPase Der from Nitrobacter hamburgensis (strain DSM 10229 / NCIMB 13809 / X14).